Here is a 116-residue protein sequence, read N- to C-terminus: Large ribosomal subunit protein bL17 (116 aa).

Belongs to the bacterial ribosomal protein bL17 family. Part of the 50S ribosomal subunit. Contacts protein L32.

This is Large ribosomal subunit protein bL17 from Dictyoglomus turgidum (strain DSM 6724 / Z-1310).